The chain runs to 1272 residues: AF4/FMR2 family member 2 (1272 aa).

Disordered regions lie at residues 93–183 (IPKN…LTQD) and 200–223 (PQIG…SSGE). The segment covering 97-107 (SVPQNPNNKNE) has biased composition (polar residues). The span at 151 to 160 (SKPEWSRDSH) shows a compositional bias: basic and acidic residues. The span at 161-183 (NPSTVLASQASGQPNKMQTLTQD) shows a compositional bias: polar residues. Residues 212–223 (AKEDSNPKSSGE) show a composition bias toward basic and acidic residues. Serine 391 carries the post-translational modification Phosphoserine. 4 disordered regions span residues 418–491 (KAKP…KWQL), 535–687 (TNAS…DQEE), 779–829 (SLHA…PEKK), and 842–903 (PPCI…QDKN). A compositionally biased stretch (pro residues) spans 426–438 (VNPPLATPQPPPA). A compositionally biased stretch (low complexity) spans 439-452 (VQASGGSGSSSESE). The residue at position 478 (threonine 478) is a Phosphothreonine. The span at 543–558 (EPKERPLLSLIREKAR) shows a compositional bias: basic and acidic residues. Over residues 576–586 (STTSETVSQRT) the composition is skewed to polar residues. A compositionally biased stretch (basic and acidic residues) spans 616 to 629 (PKEKESVELHDPPR). Residues 630–640 (GRNKATAHKPA) show a composition bias toward basic residues. The segment covering 818 to 829 (PTEVAEKIPEKK) has biased composition (basic and acidic residues). Pro residues-rich tracts occupy residues 844–853 (CISPAPPHKP) and 874–883 (FPPPLSPLPE).

Belongs to the AF4 family.

The protein localises to the nucleus speckle. RNA-binding protein. Might be involved in alternative splicing regulation through an interaction with G-quartet RNA structure. The chain is AF4/FMR2 family member 2 (AFF2) from Pongo pygmaeus (Bornean orangutan).